A 342-amino-acid polypeptide reads, in one-letter code: Cystein proteinase inhibitor protein salarin (342 aa).

Positions 1–19 (MKSLVLLLLVAVTVSSVVS) are cleaved as a signal peptide. N153 carries an N-linked (GlcNAc) asparagine glycan. O-linked (GlcNAc) threonine glycosylation is present at T184.

Post-translationally, N-glycosylated, with sialylated biantennary complex-type glycans. In terms of processing, O-glycosylated, with sialylated oligosaccharides. As to expression, expressed in the skin, liver. intestine, spleen, pancreas and kidney.

It localises to the cytoplasm. Its subcellular location is the vacuole. In terms of biological role, inhibits papain and ficin (cysteine proteinases) but not trypsin (a serine proteinase). The sequence is that of Cystein proteinase inhibitor protein salarin (salarin) from Salmo salar (Atlantic salmon).